The following is a 166-amino-acid chain: MFPMVTEFMNYGQQTVRAARYIGQGFMITLSHANRLPVTIQYPYEKLITSERFRGRIHFEFDKCIACEVCVRVCPIDLPVVDWKLETDIRKKRLLNYSIDFGICIFCGNCVEYCPTNCLSMTEEYELSTYDRHELNYNQIALGRLPMSIMDDYTIRTIFNLPEIKT.

2 4Fe-4S ferredoxin-type domains span residues 55–84 (GRIHFEFDKCIACEVCVRVCPIDLPVVDWK) and 95–124 (LNYSIDFGICIFCGNCVEYCPTNCLSMTEE). 8 residues coordinate [4Fe-4S] cluster: C64, C67, C70, C74, C104, C107, C110, and C114.

It belongs to the complex I 23 kDa subunit family. In terms of assembly, NDH is composed of at least 16 different subunits, 5 of which are encoded in the nucleus. The cofactor is [4Fe-4S] cluster.

The protein resides in the plastid. It localises to the chloroplast thylakoid membrane. It catalyses the reaction a plastoquinone + NADH + (n+1) H(+)(in) = a plastoquinol + NAD(+) + n H(+)(out). The enzyme catalyses a plastoquinone + NADPH + (n+1) H(+)(in) = a plastoquinol + NADP(+) + n H(+)(out). In terms of biological role, NDH shuttles electrons from NAD(P)H:plastoquinone, via FMN and iron-sulfur (Fe-S) centers, to quinones in the photosynthetic chain and possibly in a chloroplast respiratory chain. The immediate electron acceptor for the enzyme in this species is believed to be plastoquinone. Couples the redox reaction to proton translocation, and thus conserves the redox energy in a proton gradient. The sequence is that of NAD(P)H-quinone oxidoreductase subunit I, chloroplastic from Silphium perfoliatum (Cup plant).